A 59-amino-acid chain; its full sequence is U-scoloptoxin(23)-Er2a (59 aa).

The protein belongs to the scoloptoxin-23 family. Contains 1 disulfide bond. Expressed by the venom gland.

It localises to the secreted. This is U-scoloptoxin(23)-Er2a from Ethmostigmus rubripes (Giant centipede).